The following is a 68-amino-acid chain: Lipopolysaccharide export system ATP-binding protein LptB (68 aa).

This sequence belongs to the ABC transporter superfamily. Outer membrane lipopolysaccharide export (TC 1.B.42) family. As to quaternary structure, component of the lipopolysaccharide transport and assembly complex. The LptBFG transporter is composed of two ATP-binding proteins (LptB) and two transmembrane proteins (LptF and LptG).

The protein localises to the cytoplasm. The protein resides in the cell inner membrane. Functionally, part of the ABC transporter complex LptBFG involved in the translocation of lipopolysaccharide (LPS) from the inner membrane to the outer membrane. Probably responsible for energy coupling to the transport system. The sequence is that of Lipopolysaccharide export system ATP-binding protein LptB (lptB) from Klebsiella oxytoca.